The following is a 457-amino-acid chain: Multidrug resistance protein MdtK (457 aa).

12 consecutive transmembrane segments (helical) span residues 11-31 (LLAL…MGFV), 53-73 (IWLP…PVIA), 93-113 (WLAG…GYII), 127-147 (AVGY…FQVA), 160-180 (GMVM…IFIY), 188-208 (LGGI…FIAM), 243-263 (LPIA…ALLV), 276-296 (IALN…AAVT), 314-334 (AART…IFTV), 350-370 (VVAL…SDSI), 387-407 (IFFI…YILA), and 418-438 (PAGF…LMML).

Belongs to the multi antimicrobial extrusion (MATE) (TC 2.A.66.1) family. MdtK subfamily.

The protein resides in the cell inner membrane. Multidrug efflux pump that functions probably as a Na(+)/drug antiporter. This is Multidrug resistance protein MdtK from Salmonella agona (strain SL483).